A 327-amino-acid polypeptide reads, in one-letter code: Sideroflexin FSF1 (327 aa).

An N-acetylalanine modification is found at Ala2. Transmembrane regions (helical) follow at residues 98–118, 143–163, 179–199, and 272–292; these read NLVVTVGMLTPGLGTAGTVFW, SQLLTNYAAAVTASCGVALGL, LILGRLVPFAAVVSAGIVNVF, and ANLGLISVTMFSALPFALGIF.

The protein belongs to the sideroflexin family.

The protein localises to the mitochondrion membrane. Its function is as follows. Mitochondrial amino-acid transporter that mediates transport of serine into mitochondria. This Saccharomyces cerevisiae (strain ATCC 204508 / S288c) (Baker's yeast) protein is Sideroflexin FSF1.